The following is a 472-amino-acid chain: Glutamate--tRNA ligase (472 aa).

Positions 10–20 match the 'HIGH' region motif; the sequence is PSPTGYLHVGG. Residues Cys-99, Cys-101, Cys-126, and Asp-128 each coordinate Zn(2+). The 'KMSKS' region motif lies at 238–242; it reads KLSKR. An ATP-binding site is contributed by Lys-241.

Belongs to the class-I aminoacyl-tRNA synthetase family. Glutamate--tRNA ligase type 1 subfamily. In terms of assembly, monomer. Requires Zn(2+) as cofactor.

The protein localises to the cytoplasm. It carries out the reaction tRNA(Glu) + L-glutamate + ATP = L-glutamyl-tRNA(Glu) + AMP + diphosphate. In terms of biological role, catalyzes the attachment of glutamate to tRNA(Glu) in a two-step reaction: glutamate is first activated by ATP to form Glu-AMP and then transferred to the acceptor end of tRNA(Glu). This chain is Glutamate--tRNA ligase, found in Photorhabdus laumondii subsp. laumondii (strain DSM 15139 / CIP 105565 / TT01) (Photorhabdus luminescens subsp. laumondii).